A 492-amino-acid chain; its full sequence is Ketol-acid reductoisomerase (NADP(+)) (492 aa).

In terms of domain architecture, KARI N-terminal Rossmann spans 14-208; the sequence is LDQLGRCRFM…GGHKAGVLES (195 aa). NADP(+)-binding positions include 45–48, Arg68, Arg76, Ser78, and 108–110; these read CGAQ and DKQ. His132 is a catalytic residue. Gly158 lines the NADP(+) pocket. KARI C-terminal knotted domains follow at residues 209-344 and 345-485; these read SFVA…NAPK and YDGK…MTDM. Mg(2+) contacts are provided by Asp217, Glu221, Glu389, and Glu393. Ser414 serves as a coordination point for substrate.

This sequence belongs to the ketol-acid reductoisomerase family. Requires Mg(2+) as cofactor.

The enzyme catalyses (2R)-2,3-dihydroxy-3-methylbutanoate + NADP(+) = (2S)-2-acetolactate + NADPH + H(+). It catalyses the reaction (2R,3R)-2,3-dihydroxy-3-methylpentanoate + NADP(+) = (S)-2-ethyl-2-hydroxy-3-oxobutanoate + NADPH + H(+). It participates in amino-acid biosynthesis; L-isoleucine biosynthesis; L-isoleucine from 2-oxobutanoate: step 2/4. It functions in the pathway amino-acid biosynthesis; L-valine biosynthesis; L-valine from pyruvate: step 2/4. Its function is as follows. Involved in the biosynthesis of branched-chain amino acids (BCAA). Catalyzes an alkyl-migration followed by a ketol-acid reduction of (S)-2-acetolactate (S2AL) to yield (R)-2,3-dihydroxy-isovalerate. In the isomerase reaction, S2AL is rearranged via a Mg-dependent methyl migration to produce 3-hydroxy-3-methyl-2-ketobutyrate (HMKB). In the reductase reaction, this 2-ketoacid undergoes a metal-dependent reduction by NADPH to yield (R)-2,3-dihydroxy-isovalerate. This Haemophilus influenzae (strain 86-028NP) protein is Ketol-acid reductoisomerase (NADP(+)).